The sequence spans 616 residues: MMEHTAHDRELPIRPGWDSVVNIAESRSCFSRFQSCFARPQKLVVVIGLCLLLCSPPPGAQGLPTAADWKTLSNELSGRLHQGVPLARPCFSTYNGQPAAADEEECAAIRHRYLDAEFRANQYAGFYFAQGDGCISNTTNQCQLDPENLGASPGSGLPCNQGLVSPWYVDVRSASDVQSAFRFARRTGTPISIKASGHDYVNRHTLPGSLGLWTRNLRNMTYHATFRPAGVSGAEPVQAITFGSGVNSNEAQAFAGRNNVTLVGPSSATIAIVGGWTLFGGHSVLSPTLGLGVDRVLQIELVTPDGALRICNRQLHADLFWALRGAGAGTYGVVLSMTVRVEPATPVTLALLSFTPTLENQAPFLDLLINNTPAWSAGGWGGPMTSSSLALVSLEQDEAAAAQSMRAAADYVRGENGTVTIEQFPTYSEFYARYIAVSESYVGIGALPTLRVLPKRLHDQPQGRAELLAFLSQRARNNQTPYLFMTPPARYSTPRDSTSMHPAWRNSYWLAGFQSSYAWNASVAERREAAREDQTSARDLTALAPEGAAYPNEASPWHRDWRREFWGDDNYARLEAVKARYDPAGLLRCWHCVGFDDAWVHADPAFECMGAFDGLV.

One can recognise an FAD-binding PCMH-type domain in the interval Asn-160–Ala-344.

It belongs to the oxygen-dependent FAD-linked oxidoreductase family. FAD is required as a cofactor.

It functions in the pathway secondary metabolite biosynthesis. FAD-linked oxidoreductase; part of the gene cluster that mediates the biosynthesis of chaetoglobosin A which has a unique inhibitory activity against actin polymerization in mammalian cells. Chaetoglobosin A and its intermediates are involved in the morphological differentiation of C.globosum. The first step of the pathway is the synthesis of prochaetoglobosin I via condensation of one acetyl-CoA, 8 malonyl-CoA, and a L-tryptophan molecule by the PKS-NRPS hybrid synthetase cheA, followed by reduction of backbone double bond to install desired geometry by the enoyl reductase cheB. Further multiple oxidation steps performed by the cytochrome P450 monooxygenases cheE and cheG, as well as by the FAD-linked oxidoreductase cheF, lead to the formation of chaetoglobosin A. Depending on the order of action of these reductases, distinct intermediates can be identified. Within the pathway, the cytochrome P450 monooxygenase cheE catalyzes a stereospecific epoxidation on prochaetoglobosin I, cytoglobosin D, and chaetoglobosin J intermediates. The FAD-linked oxidoreductase cheF performs dehydrogenation of the C-20 hydroxyl groups in the 20-dihyrochaetoglobosin A and cytoglobosin D intermediates. Finally, the cytochrome P450 monooxygenase cheG can catalyze the stereospecific dihydroxylation of prochaetoglobosin I and prochaetoglobosin IV at C-19 and C-20, respectively. The Diels-Alderase cheD may play a role in the post-PKS-NRPS biosynthetic steps catalyzing Diels-Alder cyclization. The sequence is that of FAD-linked oxidoreductase cheF from Chaetomium globosum (strain ATCC 6205 / CBS 148.51 / DSM 1962 / NBRC 6347 / NRRL 1970) (Soil fungus).